A 154-amino-acid chain; its full sequence is Superoxide dismutase [Cu-Zn] (154 aa).

Residues H47 and H64 each contribute to the Cu cation site. The cysteines at positions 58 and 147 are disulfide-linked. Positions 64, 72, 81, and 84 each coordinate Zn(2+). Position 121 (H121) interacts with Cu cation. Substrate is bound at residue R144.

It belongs to the Cu-Zn superoxide dismutase family. Homodimer. The cofactor is Cu cation. It depends on Zn(2+) as a cofactor.

The protein localises to the cytoplasm. It catalyses the reaction 2 superoxide + 2 H(+) = H2O2 + O2. Its function is as follows. Destroys radicals which are normally produced within the cells and which are toxic to biological systems. The sequence is that of Superoxide dismutase [Cu-Zn] (SOD1) from Pleurocordyceps sinensis (Polycephalomyces sinensis).